Here is a 125-residue protein sequence, read N- to C-terminus: Large ribosomal subunit protein bL12 (125 aa).

Belongs to the bacterial ribosomal protein bL12 family. As to quaternary structure, homodimer. Part of the ribosomal stalk of the 50S ribosomal subunit. Forms a multimeric L10(L12)X complex, where L10 forms an elongated spine to which 2 to 4 L12 dimers bind in a sequential fashion. Binds GTP-bound translation factors.

Forms part of the ribosomal stalk which helps the ribosome interact with GTP-bound translation factors. Is thus essential for accurate translation. This is Large ribosomal subunit protein bL12 from Endomicrobium trichonymphae.